The chain runs to 831 residues: Periplasmic nitrate reductase (831 aa).

Residues 1–29 (MKVSRRDFIKQTAIAATASVAGIPLGTEA) constitute a signal peptide (tat-type signal). One can recognise a 4Fe-4S Mo/W bis-MGD-type domain in the interval 41-97 (LKWSKAPCRFCGTGCGVTVAVRDNKVVATQGDPQCEVNKGLNCVKGYFLSKIMYGQD). 4 residues coordinate [4Fe-4S] cluster: Cys48, Cys51, Cys55, and Cys83. Mo-bis(molybdopterin guanine dinucleotide)-binding positions include Lys85, Gln152, Asn177, Cys181, 214 to 221 (WGSNMAEM), 245 to 249 (STFTH), 264 to 266 (QTD), Met375, Gln379, Asn485, 511 to 512 (SD), Lys534, Asp561, and 721 to 730 (TGRVLEHWHS). Position 797 (Trp797) interacts with substrate. Residues Asn805 and Lys822 each contribute to the Mo-bis(molybdopterin guanine dinucleotide) site.

Belongs to the prokaryotic molybdopterin-containing oxidoreductase family. NasA/NapA/NarB subfamily. In terms of assembly, component of the periplasmic nitrate reductase NapAB complex composed of NapA and NapB. [4Fe-4S] cluster is required as a cofactor. The cofactor is Mo-bis(molybdopterin guanine dinucleotide). Post-translationally, predicted to be exported by the Tat system. The position of the signal peptide cleavage has not been experimentally proven.

Its subcellular location is the periplasm. The enzyme catalyses 2 Fe(II)-[cytochrome] + nitrate + 2 H(+) = 2 Fe(III)-[cytochrome] + nitrite + H2O. In terms of biological role, catalytic subunit of the periplasmic nitrate reductase complex NapAB. Receives electrons from NapB and catalyzes the reduction of nitrate to nitrite. This Cupriavidus pinatubonensis (strain JMP 134 / LMG 1197) (Cupriavidus necator (strain JMP 134)) protein is Periplasmic nitrate reductase.